Reading from the N-terminus, the 179-residue chain is Alkyl hydroperoxide reductase AhpD (179 aa).

The Proton donor role is filled by Cys-130. Cys-130 and Cys-133 are disulfide-bonded. Catalysis depends on Cys-133, which acts as the Cysteine sulfenic acid (-SOH) intermediate.

The protein belongs to the AhpD family. In terms of assembly, homotrimer.

The enzyme catalyses N(6)-[(R)-dihydrolipoyl]-L-lysyl-[lipoyl-carrier protein] + a hydroperoxide = N(6)-[(R)-lipoyl]-L-lysyl-[lipoyl-carrier protein] + an alcohol + H2O. Its function is as follows. Antioxidant protein with alkyl hydroperoxidase activity. Required for the reduction of the AhpC active site cysteine residues and for the regeneration of the AhpC enzyme activity. In Rhodococcus erythropolis (strain PR4 / NBRC 100887), this protein is Alkyl hydroperoxide reductase AhpD.